The chain runs to 320 residues: Probable L,D-transpeptidase YcfS (320 aa).

The N-terminal stretch at 1–23 is a signal peptide; that stretch reads MMIKTRFSRWLTFFTFAAAVALA. Residues 45-90 enclose the LysM domain; it reads KFHVVENDGGSLEAIAKKYNVGFLALLQANPGVDPYVPRAGSVLTI. A L,D-TPase catalytic domain is found at 102-241; that stretch reads EGIVINIAEL…VTPGTKVNII (140 aa). Histidine 201 acts as the Proton donor/acceptor in catalysis. The Nucleophile role is filled by cysteine 217.

The protein belongs to the YkuD family. As to quaternary structure, interacts with DsbG.

It is found in the periplasm. It functions in the pathway cell wall biogenesis; peptidoglycan biosynthesis. Its function is as follows. Responsible, at least in part, for anchoring of the major outer membrane lipoprotein (Lpp, also known as the Braun lipoprotein) to the peptidoglycan via a meso-diaminopimelyl-L-Lys- bond on the terminal residue of Lpp. In Escherichia coli (strain K12), this protein is Probable L,D-transpeptidase YcfS (ycfS).